The following is a 446-amino-acid chain: Methionine aminopeptidase 2-1 (446 aa).

Residues 1–88 (MAAQVTPELA…PPRVILSSIF (88 aa)) form a disordered region. Residues 32–44 (ENEDVESDDDNEG) show a composition bias toward acidic residues. The segment covering 57-72 (AKKKKKKKPKKKKKGG) has biased composition (basic residues). Histidine 196 lines the substrate pocket. Residues aspartate 216, aspartate 227, and histidine 296 each coordinate a divalent metal cation. Histidine 304 provides a ligand contact to substrate. Residues glutamate 332 and glutamate 427 each contribute to the a divalent metal cation site.

It belongs to the peptidase M24A family. Methionine aminopeptidase eukaryotic type 2 subfamily. Co(2+) serves as cofactor. It depends on Zn(2+) as a cofactor. Mn(2+) is required as a cofactor. Requires Fe(2+) as cofactor.

It localises to the cytoplasm. It carries out the reaction Release of N-terminal amino acids, preferentially methionine, from peptides and arylamides.. Cotranslationally removes the N-terminal methionine from nascent proteins. The N-terminal methionine is often cleaved when the second residue in the primary sequence is small and uncharged (Met-Ala-, Cys, Gly, Pro, Ser, Thr, or Val). In Blastomyces gilchristii (strain SLH14081) (Blastomyces dermatitidis), this protein is Methionine aminopeptidase 2-1.